The chain runs to 346 residues: Dynein regulatory complex protein 9 (346 aa).

Positions 299–308 are enriched in basic and acidic residues; sequence MEKEQREKNA. Residues 299-346 are disordered; sequence MEKEQREKNAATKIQAWWRGTLVRKGPRSKKADKSKKKDGKKGKKKRK. The 30-residue stretch at 305-334 folds into the IQ domain; that stretch reads EKNAATKIQAWWRGTLVRKGPRSKKADKSK. Residues 323–346 show a composition bias toward basic residues; it reads KGPRSKKADKSKKKDGKKGKKKRK.

It belongs to the DRC9 family. As to quaternary structure, component of the nexin-dynein regulatory complex (N-DRC). Interacts (via IQ domain) with calmodulin when calcium levels are low. Does not interact with calmodulin in the presence of Ca(2+). Interacts with hsp70 and may form a complex with camk4 and hsp70. In terms of tissue distribution, detected in adult testis, and at lower levels in brain, kidney and ovary.

Its subcellular location is the cytoplasm. It localises to the cell projection. The protein resides in the cilium. It is found in the flagellum. The protein localises to the cytoskeleton. Its subcellular location is the flagellum axoneme. Component of the nexin-dynein regulatory complex (N-DRC), a key regulator of ciliary/flagellar motility which maintains the alignment and integrity of the distal axoneme and regulates microtubule sliding in motile axonemes. Binds calmodulin when cellular Ca(2+) levels are low and thereby contributes to the regulation of calcium and calmodulin-dependent protein kinase IV (camk4) activity; contributes to the regulation of camk4 signaling cascades. Plays a role in the regulation of definitive hematopoiesis via its effects on camk4. The protein is Dynein regulatory complex protein 9 of Danio rerio (Zebrafish).